Consider the following 257-residue polypeptide: Large ribosomal subunit protein uL2 (257 aa).

Positions 207-231 are disordered; sequence VEHPFGGGNHQHIGKPSTIRRDAPA.

The protein belongs to the universal ribosomal protein uL2 family. As to quaternary structure, component of the large ribosomal subunit.

It localises to the cytoplasm. Functionally, component of the large ribosomal subunit. The ribosome is a large ribonucleoprotein complex responsible for the synthesis of proteins in the cell. This chain is Large ribosomal subunit protein uL2 (rpl8), found in Xenopus tropicalis (Western clawed frog).